Consider the following 587-residue polypeptide: Protein SIX6OS1 (587 aa).

The segment at 356–378 (TPQKQSNSNQWSEKGDKDAEYGD) is disordered. Residues 357-367 (PQKQSNSNQWS) show a composition bias toward polar residues. Residues 368 to 378 (EKGDKDAEYGD) are compositionally biased toward basic and acidic residues. Residue Ser439 is modified to Phosphoserine. Positions 568 to 587 (SSSLKGFSSSSQNTTQFTFF) are disordered.

In terms of assembly, interacts with SYCE1. Interacts with proteasome subunit PSMA8; to participate in meiosis progression during spermatogenesis. As to expression, highest expression in retina, skeletal muscle, testis and colon.

Its subcellular location is the chromosome. Functionally, meiotic protein that localizes to the central element of the synaptonemal complex and is required for chromosome synapsis during meiotic recombination. Required for the appropriate processing of intermediate recombination nodules before crossover formation. The protein is Protein SIX6OS1 of Homo sapiens (Human).